Consider the following 484-residue polypeptide: METSESTDRSQSRCLDLQPSSDGLGSSSDPFSSWDGRHRSALVAATAAASAAATAASTARAAALWTKSPAPYSHGNLLTEPSSDSLTERYTGPRFTHKISHGRLGFQPAYFSHIAWNPYTTNDLSSSRGPIPGSSSGPVPGSSSSPGPDSSSDPGPSSSSGPGGSPGGSGRGPGHGPGPGGGSGQGPGGGSGQGTDLGPAIDSRHSPGHGHGPRFNFSAPVGFRNPRGDLIPNYTGCKHHCHWEPQKQSWKFLKVSEPGARGLWKPPEVEGKSTVLSETLPRGQCLLYNWEEERATNYLDQVPVMQDGSESFFFRHGHRGLLTLQPQSPTSSCTTQKDSYQPPKSHCQPIRGKREAILEMLLRQQICKEVQAEQEPTRKDSEVESVTHHDYKKELVQAGPPAPTKIHDYHTEQPETFWLERAPQLPGVSNIRTLDTPFRKNCSFSTPVPLSLEQPLPFEPESYSQHGEISSLACQGGGQGGGGG.

The span at 1 to 11 (METSESTDRSQ) shows a compositional bias: basic and acidic residues. Disordered regions lie at residues 1 to 32 (METS…DPFS), 123 to 221 (DLSS…SAPV), and 324 to 348 (LQPQ…SHCQ). Composition is skewed to low complexity over residues 20-32 (SSDG…DPFS) and 125-160 (SSSR…SSSS). Over residues 161-195 (GPGGSPGGSGRGPGHGPGPGGGSGQGPGGGSGQGT) the composition is skewed to gly residues. The span at 324–339 (LQPQSPTSSCTTQKDS) shows a compositional bias: polar residues. 2 mn regions span residues 332-345 (SCTT…PPKS) and 384-398 (ESVT…LVQA). Residues 455–484 (PLPFEPESYSQHGEISSLACQGGGQGGGGG) form a disordered region. Positions 475–484 (QGGGQGGGGG) are enriched in gly residues.

This sequence belongs to the SPAG8 family. In terms of assembly, microtubule inner protein component of sperm flagellar doublet microtubules. Interacts with FHL5 (via second LIM domain). Interacts with RANBP9. As to expression, expressed in trachea multiciliated cells.

It is found in the cytoplasm. Its subcellular location is the nucleus. It localises to the cytoplasmic vesicle. The protein localises to the secretory vesicle. The protein resides in the acrosome. It is found in the cytoskeleton. Its subcellular location is the microtubule organizing center. It localises to the spindle. The protein localises to the cilium axoneme. The protein resides in the flagellum axoneme. In terms of biological role, microtubule inner protein (MIP) part of the dynein-decorated doublet microtubules (DMTs) in cilia axoneme, which is required for motile cilia beating. Plays a role in spermatogenesis by enhancing the binding of CREM isoform tau to its coactivator FHL5 and increasing the FHL5-regulated transcriptional activation of CREM isoform tau. Involved in the acrosome reaction and in binding of sperm to the zona pellucida. Plays a role in regulation of the cell cycle by controlling progression through the G2/M phase, possibly by delaying the activation of CDK1 which is required for entry into mitosis. May play a role in fertility and microtubule formation through interaction with RANBP9. This chain is Sperm-associated antigen 8 (SPAG8), found in Bos taurus (Bovine).